The sequence spans 613 residues: Chaperone protein DnaK (613 aa).

Thr173 carries the post-translational modification Phosphothreonine; by autocatalysis. The interval 577–613 (AKQAQAQQEGGAEGAQKADDNVVDAEYEEVNDDQEKK) is disordered. The segment covering 597 to 613 (NVVDAEYEEVNDDQEKK) has biased composition (acidic residues).

This sequence belongs to the heat shock protein 70 family.

Its function is as follows. Acts as a chaperone. The polypeptide is Chaperone protein DnaK (Bacillus pumilus (strain SAFR-032)).